The chain runs to 526 residues: Probable feruloyl esterase B (526 aa).

An N-terminal signal peptide occupies residues 1–18 (MARLSLLTLLALGSAALA). 2 disulfides stabilise this stretch: Cys27/Cys74 and Cys62/Cys113. Residue Asn137 is glycosylated (N-linked (GlcNAc...) asparagine). 4 disulfide bridges follow: Cys186–Cys441, Cys255–Cys272, Cys281–Cys291, and Cys503–Cys525. Residue Ser187 is the Acyl-ester intermediate of the active site. Asn233 is a glycosylation site (N-linked (GlcNAc...) asparagine). Ca(2+) contacts are provided by Asp256, Asp259, Ala261, Asp263, and Ile265. N-linked (GlcNAc...) asparagine glycosylation is present at Asn311. Active-site charge relay system residues include Asp400 and His440. Asn516 is a glycosylation site (N-linked (GlcNAc...) asparagine).

Belongs to the tannase family.

The protein localises to the secreted. It catalyses the reaction feruloyl-polysaccharide + H2O = ferulate + polysaccharide.. Involved in degradation of plant cell walls. Hydrolyzes the feruloyl-arabinose ester bond in arabinoxylans as well as the feruloyl-galactose and feruloyl-arabinose ester bonds in pectin. The polypeptide is Probable feruloyl esterase B (faeB) (Aspergillus clavatus (strain ATCC 1007 / CBS 513.65 / DSM 816 / NCTC 3887 / NRRL 1 / QM 1276 / 107)).